Reading from the N-terminus, the 140-residue chain is Relaxin-3 (140 aa).

Residues 1–26 (MAKRPLLLLLLAVWVLAGELWLRTEA) form the signal peptide. Intrachain disulfides connect C36–C127, C48–C140, and C126–C131. A propeptide spans 56-116 (SDMLAHEALG…RTPGALRGSR (61 aa)) (connecting peptide).

It belongs to the insulin family. Heterodimer of a B chain and an A chain linked by two disulfide bonds.

The protein resides in the secreted. May play a role in neuropeptide signaling processes. Ligand for LGR7, RXFP3 and RXFP4. The protein is Relaxin-3 (RLN3) of Sus scrofa (Pig).